The following is a 1440-amino-acid chain: Protein lin-15B (1440 aa).

Disordered stretches follow at residues 1–22, 48–67, 618–660, and 738–769; these read MQTLKTARLTSNPASIPTSSSS, ILRHRTLPAPTQETAHHLDA, PKEE…GRPI, and KDEPLDEDDFNHPSTDPVPNRTTASSQGPSSY. The span at 10–22 shows a compositional bias: low complexity; that stretch reads TSNPASIPTSSSS. Over residues 631 to 646 the composition is skewed to low complexity; sequence STSSPATSSPTIIRPR. A compositionally biased stretch (polar residues) spans 757–767; it reads NRTTASSQGPS. The segment at 1135-1209 adopts a THAP-type zinc-finger fold; that stretch reads NPGVCCFCSK…LLKGMIPDAA (75 aa). Disordered regions lie at residues 1239–1281, 1298–1350, and 1395–1440; these read AIDL…EPSQ, RELS…GTSQ, and FADE…PSNE. Acidic residues predominate over residues 1254 to 1264; that stretch reads TQEEEEEEEYE. Positions 1317 to 1329 form a DNA-binding region, a.T hook 1; sequence PNPRGRPRKYPKN. Residues 1396–1407 are compositionally biased toward acidic residues; that stretch reads ADEEEEEEEYEE. The segment at residues 1418–1430 is a DNA-binding region (a.T hook 2); it reads GRPVGRPRKDANK.

Synthetic multivulva (synMuv) class B protein. SynMuv proteins are required to repress the induction of vulval development. Acts redundantly with SynMuv class A protein lin-15A to negatively regulate vulval development. Regulates let-23 basal activity. This Caenorhabditis elegans protein is Protein lin-15B.